The chain runs to 247 residues: Eukaryotic translation initiation factor 6 (247 aa).

Serine 174 and serine 175 each carry phosphoserine; by CK1.

The protein belongs to the eIF-6 family. As to quaternary structure, monomer. Associates with the 60S ribosomal subunit. In terms of processing, phosphorylation at Ser-174 and Ser-175 promotes nuclear export.

It is found in the cytoplasm. The protein localises to the nucleus. Its subcellular location is the nucleolus. Its function is as follows. Binds to the 60S ribosomal subunit and prevents its association with the 40S ribosomal subunit to form the 80S initiation complex in the cytoplasm. Is also involved in ribosome biogenesis. Associates with pre-60S subunits in the nucleus and is involved in its nuclear export. The polypeptide is Eukaryotic translation initiation factor 6 (tif6) (Aspergillus oryzae (strain ATCC 42149 / RIB 40) (Yellow koji mold)).